A 180-amino-acid polypeptide reads, in one-letter code: UPF0743 protein C215.06c (180 aa).

2 consecutive C2HC LYAR-type zinc fingers follow at residues 1 to 26 (MVSF…SRCH) and 27 to 51 (GAYF…TSCM). Residues Cys6, Cys9, His21, Cys25, Cys32, Cys35, His47, and Cys50 each contribute to the Zn(2+) site. The interval 61-125 (LYRPTKKELK…KETVSSPAEQ (65 aa)) is disordered. A compositionally biased stretch (polar residues) spans 77-95 (NAVNSKELSPNTDNQNTPA). At Ser85 the chain carries Phosphoserine. Residues 100–111 (HSLDENEKDKEN) are compositionally biased toward basic and acidic residues.

The protein belongs to the UPF0743 family.

Its subcellular location is the nucleus. In Schizosaccharomyces pombe (strain 972 / ATCC 24843) (Fission yeast), this protein is UPF0743 protein C215.06c.